A 344-amino-acid chain; its full sequence is tRNA N6-adenosine threonylcarbamoyltransferase (344 aa).

2 residues coordinate Fe cation: His-111 and His-115. Residues 136–140 (LVSGG), Asp-169, Gly-182, and Asn-279 each bind substrate. Asp-307 serves as a coordination point for Fe cation.

This sequence belongs to the KAE1 / TsaD family. Fe(2+) is required as a cofactor.

The protein localises to the cytoplasm. The catalysed reaction is L-threonylcarbamoyladenylate + adenosine(37) in tRNA = N(6)-L-threonylcarbamoyladenosine(37) in tRNA + AMP + H(+). Functionally, required for the formation of a threonylcarbamoyl group on adenosine at position 37 (t(6)A37) in tRNAs that read codons beginning with adenine. Is involved in the transfer of the threonylcarbamoyl moiety of threonylcarbamoyl-AMP (TC-AMP) to the N6 group of A37, together with TsaE and TsaB. TsaD likely plays a direct catalytic role in this reaction. The protein is tRNA N6-adenosine threonylcarbamoyltransferase of Mannheimia succiniciproducens (strain KCTC 0769BP / MBEL55E).